Here is a 260-residue protein sequence, read N- to C-terminus: 1-(5-phosphoribosyl)-5-[(5-phosphoribosylamino)methylideneamino] imidazole-4-carboxamide isomerase (260 aa).

Asp8 (proton acceptor) is an active-site residue. Catalysis depends on Asp130, which acts as the Proton donor.

Belongs to the HisA/HisF family.

It localises to the cytoplasm. It catalyses the reaction 1-(5-phospho-beta-D-ribosyl)-5-[(5-phospho-beta-D-ribosylamino)methylideneamino]imidazole-4-carboxamide = 5-[(5-phospho-1-deoxy-D-ribulos-1-ylimino)methylamino]-1-(5-phospho-beta-D-ribosyl)imidazole-4-carboxamide. It participates in amino-acid biosynthesis; L-histidine biosynthesis; L-histidine from 5-phospho-alpha-D-ribose 1-diphosphate: step 4/9. The protein is 1-(5-phosphoribosyl)-5-[(5-phosphoribosylamino)methylideneamino] imidazole-4-carboxamide isomerase of Chlorobaculum parvum (strain DSM 263 / NCIMB 8327) (Chlorobium vibrioforme subsp. thiosulfatophilum).